The following is a 513-amino-acid chain: ATP synthase subunit alpha 1 (513 aa).

ATP is bound at residue 169–176 (GDRQTGKT).

It belongs to the ATPase alpha/beta chains family. In terms of assembly, F-type ATPases have 2 components, CF(1) - the catalytic core - and CF(0) - the membrane proton channel. CF(1) has five subunits: alpha(3), beta(3), gamma(1), delta(1), epsilon(1). CF(0) has three main subunits: a(1), b(2) and c(9-12). The alpha and beta chains form an alternating ring which encloses part of the gamma chain. CF(1) is attached to CF(0) by a central stalk formed by the gamma and epsilon chains, while a peripheral stalk is formed by the delta and b chains.

The protein localises to the cell inner membrane. The catalysed reaction is ATP + H2O + 4 H(+)(in) = ADP + phosphate + 5 H(+)(out). Produces ATP from ADP in the presence of a proton gradient across the membrane. The alpha chain is a regulatory subunit. This is ATP synthase subunit alpha 1 from Vibrio campbellii (strain ATCC BAA-1116).